Here is a 301-residue protein sequence, read N- to C-terminus: Putative hydro-lyase C5H10.01 (301 aa).

It belongs to the D-glutamate cyclase family.

The protein is Putative hydro-lyase C5H10.01 of Schizosaccharomyces pombe (strain 972 / ATCC 24843) (Fission yeast).